A 110-amino-acid chain; its full sequence is Large ribosomal subunit protein uL22 (110 aa).

This sequence belongs to the universal ribosomal protein uL22 family. In terms of assembly, part of the 50S ribosomal subunit.

In terms of biological role, this protein binds specifically to 23S rRNA; its binding is stimulated by other ribosomal proteins, e.g. L4, L17, and L20. It is important during the early stages of 50S assembly. It makes multiple contacts with different domains of the 23S rRNA in the assembled 50S subunit and ribosome. Functionally, the globular domain of the protein is located near the polypeptide exit tunnel on the outside of the subunit, while an extended beta-hairpin is found that lines the wall of the exit tunnel in the center of the 70S ribosome. This is Large ribosomal subunit protein uL22 from Vibrio parahaemolyticus serotype O3:K6 (strain RIMD 2210633).